The primary structure comprises 454 residues: N-myc 2 proto-oncogene protein (454 aa).

3 disordered regions span residues 133-166 (EKMQ…HSGT), 231-270 (AAPP…EEEE), and 326-374 (SPYV…VRRR). The segment covering 256 to 270 (ALSDEVDEEEDEEEE) has biased composition (acidic residues). Basic and acidic residues predominate over residues 363–374 (RKSDSEDSVRRR). A bHLH domain is found at 371-423 (VRRRNHNILERQRRNDLRSSFTTLRDHVPELVKNEKAAKVVILKKACEYVHYL). The interval 423–444 (LQAKEHQLLMEKEKLQARQQQL) is leucine-zipper.

Efficient DNA binding requires dimerization with another bHLH protein.

It localises to the nucleus. This chain is N-myc 2 proto-oncogene protein (N-MYC2), found in Otospermophilus beecheyi (California ground squirrel).